The chain runs to 75 residues: Putative antitoxin VapB12 (75 aa).

Functionally, putative antitoxin component of a possible type II toxin-antitoxin (TA) system. The cognate toxin is VapC12. This chain is Putative antitoxin VapB12 (vapB12), found in Mycobacterium tuberculosis (strain CDC 1551 / Oshkosh).